Reading from the N-terminus, the 58-residue chain is Small ribosomal subunit protein bS21 (58 aa).

Residues 36 to 58 (RHHETPVEKYKRKLQQRRRSRRR) are disordered. The span at 45 to 58 (YKRKLQQRRRSRRR) shows a compositional bias: basic residues.

This sequence belongs to the bacterial ribosomal protein bS21 family.

This is Small ribosomal subunit protein bS21 from Prochlorococcus marinus (strain NATL1A).